An 82-amino-acid chain; its full sequence is Acyl carrier protein (82 aa).

Positions 3-81 (LSREKVLESI…DAVDFIIAAK (79 aa)) constitute a Carrier domain. An O-(pantetheine 4'-phosphoryl)serine modification is found at serine 41.

Belongs to the acyl carrier protein (ACP) family. 4'-phosphopantetheine is transferred from CoA to a specific serine of apo-ACP by AcpS. This modification is essential for activity because fatty acids are bound in thioester linkage to the sulfhydryl of the prosthetic group.

The protein resides in the cytoplasm. The protein operates within lipid metabolism; fatty acid biosynthesis. Its function is as follows. Carrier of the growing fatty acid chain in fatty acid biosynthesis. The sequence is that of Acyl carrier protein from Tropheryma whipplei (strain Twist) (Whipple's bacillus).